The sequence spans 485 residues: NADH-quinone oxidoreductase subunit N (485 aa).

The next 14 helical transmembrane spans lie at 8–28, 35–55, 71–91, 105–125, 127–147, 159–179, 203–223, 235–255, 271–291, 297–317, 326–346, 373–393, 408–430, and 455–475; these read LIALLPLLIVGLTVVVVMLSI, FLNATLSVIGLNAALVSLWFV, GFAMLYTGLVLLASLATCTFA, FYLLVLIASLGGILLTNANHL, ALFLGIELISLPLFGLIGYAF, YTILSAAASSFLLFGMALVYA, LLAGFGLMIVGLGFKLSLVPF, PAPVSTFLATASKIAIFGVVM, VVLGIIAFASIIFGNLMALSQ, LLGYSSISHLGYLLVALIALQ, VGVYLAGYLFSSLGAFGVVSL, AAVMTVMMLSLAGIPMTLGFI, WWLVAAVVVGSAIGLYYYLRVAV, and IVVLISALLVLVLGVWPQPLI.

This sequence belongs to the complex I subunit 2 family. NDH-1 is composed of 13 different subunits. Subunits NuoA, H, J, K, L, M, N constitute the membrane sector of the complex.

The protein resides in the cell inner membrane. The enzyme catalyses a quinone + NADH + 5 H(+)(in) = a quinol + NAD(+) + 4 H(+)(out). In terms of biological role, NDH-1 shuttles electrons from NADH, via FMN and iron-sulfur (Fe-S) centers, to quinones in the respiratory chain. The immediate electron acceptor for the enzyme in this species is believed to be ubiquinone. Couples the redox reaction to proton translocation (for every two electrons transferred, four hydrogen ions are translocated across the cytoplasmic membrane), and thus conserves the redox energy in a proton gradient. In Salmonella dublin (strain CT_02021853), this protein is NADH-quinone oxidoreductase subunit N.